Consider the following 356-residue polypeptide: Malate dehydrogenase, glyoxysomal (356 aa).

Residues 1 to 36 (MEDAAAAARRMERLASHLRPPASQMEESPLLRGSNC) constitute a glyoxysome transit peptide. NAD(+) is bound by residues 51–57 (GASGGIG) and D77. Residues R124 and R130 each coordinate substrate. NAD(+) contacts are provided by residues N137 and 160–162 (ISN). Substrate-binding residues include N162 and R196. H220 serves as the catalytic Proton acceptor. M271 serves as a coordination point for NAD(+).

The protein belongs to the LDH/MDH superfamily. MDH type 1 family. In terms of assembly, homodimer.

The protein resides in the glyoxysome. The catalysed reaction is (S)-malate + NAD(+) = oxaloacetate + NADH + H(+). The chain is Malate dehydrogenase, glyoxysomal from Oryza sativa subsp. japonica (Rice).